The following is a 416-amino-acid chain: tRNA(Met) cytidine acetate ligase (416 aa).

Residues V7–L20, G102, N166, and R191 each bind ATP.

This sequence belongs to the TmcAL family.

Its subcellular location is the cytoplasm. The catalysed reaction is cytidine(34) in elongator tRNA(Met) + acetate + ATP = N(4)-acetylcytidine(34) in elongator tRNA(Met) + AMP + diphosphate. In terms of biological role, catalyzes the formation of N(4)-acetylcytidine (ac(4)C) at the wobble position of elongator tRNA(Met), using acetate and ATP as substrates. First activates an acetate ion to form acetyladenylate (Ac-AMP) and then transfers the acetyl group to tRNA to form ac(4)C34. The sequence is that of tRNA(Met) cytidine acetate ligase from Syntrophomonas wolfei subsp. wolfei (strain DSM 2245B / Goettingen).